A 141-amino-acid polypeptide reads, in one-letter code: Large ribosomal subunit protein uL14 (141 aa).

This sequence belongs to the universal ribosomal protein uL14 family. In terms of assembly, part of the 50S ribosomal subunit. Forms a cluster with proteins L3 and L24e, part of which may contact the 16S rRNA in 2 intersubunit bridges.

Binds to 23S rRNA. Forms part of two intersubunit bridges in the 70S ribosome. The polypeptide is Large ribosomal subunit protein uL14 (Pyrococcus abyssi (strain GE5 / Orsay)).